We begin with the raw amino-acid sequence, 175 residues long: Co-chaperone protein HscB homolog (175 aa).

Residues 7–79 enclose the J domain; the sequence is SHFDLFHLPA…LQRASYLLSL (73 aa).

The protein belongs to the HscB family. As to quaternary structure, interacts with HscA and stimulates its ATPase activity.

Co-chaperone involved in the maturation of iron-sulfur cluster-containing proteins. Seems to help targeting proteins to be folded toward HscA. The chain is Co-chaperone protein HscB homolog from Burkholderia vietnamiensis (strain G4 / LMG 22486) (Burkholderia cepacia (strain R1808)).